Here is a 293-residue protein sequence, read N- to C-terminus: Ribosomal protein L11 methyltransferase (293 aa).

Thr-145, Gly-166, Asp-188, and Asn-230 together coordinate S-adenosyl-L-methionine.

This sequence belongs to the methyltransferase superfamily. PrmA family.

It is found in the cytoplasm. The enzyme catalyses L-lysyl-[protein] + 3 S-adenosyl-L-methionine = N(6),N(6),N(6)-trimethyl-L-lysyl-[protein] + 3 S-adenosyl-L-homocysteine + 3 H(+). Functionally, methylates ribosomal protein L11. This is Ribosomal protein L11 methyltransferase from Actinobacillus pleuropneumoniae serotype 5b (strain L20).